The sequence spans 1465 residues: Claspin (1465 aa).

A compositionally biased stretch (low complexity) spans 1-12; the sequence is MSESLAETAAAA. Disordered regions lie at residues 1–490, 544–566, and 585–636; these read MSES…KAKV, ATALAGGSPMPSRQPRKSVGLRM, and ATEF…TEDM. 7 positions are modified to phosphoserine: serine 45, serine 49, serine 52, serine 64, serine 75, serine 109, and serine 114. Basic and acidic residues predominate over residues 121–133; that stretch reads QAEKKTQKEEGKQ. Residues 154 to 163 show a composition bias toward basic residues; that stretch reads KSNKTKKAVK. Residues 205 to 216 show a composition bias toward basic and acidic residues; that stretch reads EYDHHQQHEKPA. Residues 217–228 show a composition bias toward basic residues; it reads KTQKSKKLAKKQ. Composition is skewed to basic and acidic residues over residues 229-246, 254-263, 273-286, and 296-335; these read KQQEDDKEDNGTEQEKKK, KKSDKSKIDS, EDLKMYQEDQEPQK, and TNKDSKEESGEDQEHQEQKKPLKKIKLDNIDTKEDKEQIV. Positions 260–281 form a coiled coil; sequence KIDSLMDNEEDAGEDLKMYQED. Residues 336–346 are compositionally biased toward basic residues; it reads KPKKMAKKNKQ. Residues serine 350 and serine 354 each carry the phosphoserine modification. The span at 358–373 shows a compositional bias: basic and acidic residues; sequence QNEKVDQDHDLKKMSS. Residues 375–388 are compositionally biased toward acidic residues; the sequence is NELEMGSDKEDQEM. Serine 381, serine 404, serine 406, serine 432, serine 434, serine 444, serine 456, serine 458, and serine 468 each carry phosphoserine. Positions 400–417 are enriched in basic and acidic residues; sequence QRMDSESEDEIPKTESEK. Positions 432–441 are enriched in acidic residues; it reads SESEPEETAE. A compositionally biased stretch (acidic residues) spans 456–470; the sequence is SESEPELDNPEESAG. Positions 564-587 form a coiled coil; that stretch reads LRMTREELEAYAKLMEDRAKEATE. Residues 594-606 are compositionally biased toward acidic residues; it reads ESDEEDDSENEEP. Threonine 693 is subject to Phosphothreonine. A coiled-coil region spans residues 839–874; sequence LITKKRMEDLRKKQAEEQEKMAEDEEEGMDVDEEYE. The segment covering 845 to 859 has biased composition (basic and acidic residues); it reads MEDLRKKQAEEQEKM. Positions 845-977 are disordered; that stretch reads MEDLRKKQAE…LDLLQTPKPS (133 aa). Acidic residues-rich tracts occupy residues 860 to 875, 913 to 942, and 960 to 969; these read AEDEEEGMDVDEEYEP, ADEDPEDNPVEDSEDEKNDSESEQECEANP, and DDNSDEDDLD. A Phosphoserine modification is found at serine 963. The residue at position 973 (threonine 973) is a Phosphothreonine. Residue serine 990 is modified to Phosphoserine. The tract at residues 1058–1154 is disordered; the sequence is CSGTFATQLP…AEPVEEIPET (97 aa). The segment covering 1067-1076 has biased composition (low complexity); sequence PSQAPTQQPE. 2 positions are modified to phosphoserine: serine 1093 and serine 1094. Acidic residues predominate over residues 1094 to 1103; the sequence is SDEEAQEDAL. Positions 1109-1123 are enriched in basic residues; that stretch reads RNKKLTKKRPKKKAK. Residues 1127–1154 are compositionally biased toward acidic residues; sequence SDDEDSDDEVEEFDEESDAEPVEEIPET. A Phosphoserine modification is found at serine 1287.

It belongs to the claspin family. Phosphorylated in response to DNA damage by IR and HU treatment. Phosphorylation does not require mei-41 or tefu. As to expression, detected in the ovary but not in the testis (at protein level).

The protein resides in the nucleus. Its function is as follows. Required for checkpoint signaling in response to DNA replication stress; either resulting from normal embryogenesis or induced by the DNA synthesis inhibitor hydroxyurea (HU). It is not required for the G2 arrest resulting from DNA double strand breaks induced by ionizing irradiation (IR). Necessary for the timely phosphorylation of Cdk1 at the mid-blastula transition. May have a minor role in maintaining genomic stability in mitotic cells. This is Claspin from Drosophila melanogaster (Fruit fly).